The chain runs to 530 residues: 5-aminolevulinate synthase, mitochondrial (530 aa).

A mitochondrion-targeting transit peptide spans 1–26; it reads MFRPVLKVRPSFSYPYSIVSSRSVRL. Residues Arg-73, Ser-186, and Lys-205 each coordinate substrate. Positions 238, 266, and 316 each coordinate pyridoxal 5'-phosphate. The active site involves Lys-319. Position 319 is an N6-(pyridoxal phosphate)lysine (Lys-319). The pyridoxal 5'-phosphate site is built by Thr-348 and Thr-349. Thr-434 is a substrate binding site.

It belongs to the class-II pyridoxal-phosphate-dependent aminotransferase family. Homodimer. Requires pyridoxal 5'-phosphate as cofactor.

Its subcellular location is the mitochondrion matrix. It catalyses the reaction succinyl-CoA + glycine + H(+) = 5-aminolevulinate + CO2 + CoA. The protein operates within porphyrin-containing compound metabolism; protoporphyrin-IX biosynthesis; 5-aminolevulinate from glycine: step 1/1. Catalyzes the synthesis of 5-aminolevulinate (ALA) from succinyl-CoA and glycine, the first and rate-limiting step in heme biosynthesis. In Candida glabrata (strain ATCC 2001 / BCRC 20586 / JCM 3761 / NBRC 0622 / NRRL Y-65 / CBS 138) (Yeast), this protein is 5-aminolevulinate synthase, mitochondrial (HEM1).